The following is an 89-amino-acid chain: Repressor protein (89 aa).

Positions 29-52 form a DNA-binding region, H-T-H motif; sequence SGDIARNTGYSRRRISDRCTVLVD.

Its function is as follows. Transcriptional repressor expressed under lysogenic conditions, which specifically binds the host DNA site 'RRGAAG'. The binding occurs cooperatively, probably as 2 copies of a dimer. Possibly prevents RNA polymerase access to the promoters for lytic cell cycle transcription. The sequence is that of Repressor protein (T6) from Halobacterium salinarum (Halobacterium halobium).